The primary structure comprises 328 residues: GMP reductase (328 aa).

Cys176 functions as the Thioimidate intermediate in the catalytic mechanism. 205–228 contacts NADP(+); the sequence is IIADGGIRTHGDIAKSIRFGASMI.

This sequence belongs to the IMPDH/GMPR family. GuaC type 2 subfamily.

The catalysed reaction is IMP + NH4(+) + NADP(+) = GMP + NADPH + 2 H(+). Catalyzes the irreversible NADPH-dependent deamination of GMP to IMP. It functions in the conversion of nucleobase, nucleoside and nucleotide derivatives of G to A nucleotides, and in maintaining the intracellular balance of A and G nucleotides. This chain is GMP reductase, found in Streptococcus pneumoniae serotype 4 (strain ATCC BAA-334 / TIGR4).